The sequence spans 156 residues: Prolamin PPROL 17D (156 aa).

The first 19 residues, 1-19 (MKIIFFFALLAIAACSASA), serve as a signal peptide directing secretion. Residue Gln-20 is modified to Pyrrolidone carboxylic acid.

The protein belongs to the prolamin family.

Its subcellular location is the vacuole. The protein resides in the aleurone grain. Seed storage protein; serves as a source of nitrogen, carbon and sulfur for the young developing seedling. The sequence is that of Prolamin PPROL 17D from Oryza sativa subsp. japonica (Rice).